A 465-amino-acid chain; its full sequence is tRNA modification GTPase MnmE (465 aa).

(6S)-5-formyl-5,6,7,8-tetrahydrofolate is bound by residues Arg-23, Glu-81, and Lys-120. Positions 217–389 (GVHVVLAGRP…LIASLCDKVG (173 aa)) constitute a TrmE-type G domain. Asn-227 is a K(+) binding site. Residues 227 to 232 (NAGKSS), 246 to 252 (TDVAGTT), and 271 to 274 (DTAG) contribute to the GTP site. Mg(2+) is bound at residue Ser-231. Positions 246, 248, and 251 each coordinate K(+). Thr-252 provides a ligand contact to Mg(2+). Lys-465 provides a ligand contact to (6S)-5-formyl-5,6,7,8-tetrahydrofolate.

It belongs to the TRAFAC class TrmE-Era-EngA-EngB-Septin-like GTPase superfamily. TrmE GTPase family. As to quaternary structure, homodimer. Heterotetramer of two MnmE and two MnmG subunits. K(+) serves as cofactor.

The protein localises to the cytoplasm. Functionally, exhibits a very high intrinsic GTPase hydrolysis rate. Involved in the addition of a carboxymethylaminomethyl (cmnm) group at the wobble position (U34) of certain tRNAs, forming tRNA-cmnm(5)s(2)U34. This chain is tRNA modification GTPase MnmE, found in Psychrobacter sp. (strain PRwf-1).